The following is a 4699-amino-acid chain: Fat-like cadherin-related tumor suppressor homolog (4699 aa).

A signal peptide spans 1 to 38; it reads MFTMKIKKYVTPVKRKAFTILQWISLLCSLWLIPTVQS. The Extracellular segment spans residues 39-4285; it reads KADEKHTATL…KNFSIEHISG (4247 aa). Cadherin domains are found at residues 63–183, 184–291, 288–400, 401–507, 508–613, 614–716, 773–877, 878–980, 981–1088, 1089–1198, 1194–1299, 1300–1405, 1408–1506, 1507–1612, 1613–1717, 1718–1815, 1816–1932, 1933–2033, 2034–2140, 2141–2241, 2242–2341, 2342–2449, 2450–2551, 2552–2654, 2655–2763, 2764–2860, 2861–2967, 2968–3072, 3068–3169, 3170–3273, 3274–3378, 3379–3483, 3484–3588, and 3589–3696; these read SHSV…SPLF, YPTQ…APEI, APEI…IPIF, TQEI…DPIF, ENVN…RPQF, ERVN…SSIL, VNFP…RPVI, QKTL…APVF, GVQE…APEF, DDFV…KPVY, DKPV…SPEF, DQRV…APLI, KTSE…PPQF, AKDV…HPEF, TAKI…PPKF, PTNN…IPYF, VQNE…PPVF, NERE…NFAF, QRES…CPLF, VNMP…MPVF, EKQF…YPEI, ESDI…APCF, VEPS…SPLF, DQST…VPYF, LLKE…IPTF, EKSS…YPKF, DNTF…APVF, KLPI…KPRY, LKPR…MPIF, SMAQ…PPEF, SMRQ…SPTF, LQNL…APIF, SSSN…PPIV, and TPLE…VIRF. N68 and N159 each carry an N-linked (GlcNAc...) asparagine glycan. N367 is a glycosylation site (N-linked (GlcNAc...) asparagine). N-linked (GlcNAc...) asparagine glycans are attached at residues N782, N846, and N926. 6 N-linked (GlcNAc...) asparagine glycosylation sites follow: N1109, N1201, N1315, N1442, N1476, and N1514. Cystine bridges form between C3807-C3819, C3814-C3851, C3853-C3862, C3869-C3880, C3874-C3891, C3893-C3902, C4071-C4105, C4117-C4128, C4122-C4138, C4140-C4149, C4156-C4167, C4161-C4177, C4179-C4188, C4194-C4205, C4199-C4214, C4216-C4224, C4231-C4242, C4236-C4251, and C4253-C4262. Positions 3865 to 3903 constitute an EGF-like 1 domain; the sequence is TVNACSTDPCSPQRICMPSGSALGYQCVCPKGFSGTYCE. One can recognise a Laminin G-like domain in the interval 3921-4105; the sequence is AVSFGGKSYA…KRFTNVEFKC (185 aa). EGF-like domains are found at residues 4113 to 4150, 4152 to 4189, 4190 to 4225, and 4227 to 4263; these read RLGI…KHCE, DLDP…KRCE, YGKF…PTCE, and DVDE…ASCG. The helical transmembrane segment at 4286-4306 threads the bilayer; the sequence is IISGVAVVLVIISCVLCCVVL. At 4307 to 4699 the chain is on the cytoplasmic side; it reads KRSSSSKRRN…EFLPQQQTNN (393 aa).

As to expression, localizes where basal actin filaments terminate.

It is found in the cell membrane. Its function is as follows. Required for the planar polarity of actin filament orientation at the basal side of ovarian follicle cells. Required for proper egg chamber shape and elongation of the egg chamber during oogenesis. Required for the correct planar polarization of Rab10 within the basal follicle cell epithelium and is therefore indirectly involved in the Rab10-dependent remodeling of the basal membrane during egg chamber elongation. The chain is Fat-like cadherin-related tumor suppressor homolog (kug) from Drosophila melanogaster (Fruit fly).